Here is a 190-residue protein sequence, read N- to C-terminus: DNA-invertase hin (190 aa).

The 134-residue stretch at 2–135 folds into the Resolvase/invertase-type recombinase catalytic domain; it reads ATIGYIRVST…AGLAAARAQG (134 aa). S10 serves as the catalytic O-(5'-phospho-DNA)-serine intermediate. The segment at residues 162 to 181 is a DNA-binding region (H-T-H motif); it reads RQQLAIIFGIGVSTLYRYFP.

Belongs to the site-specific recombinase resolvase family.

In terms of biological role, a DNA fragment of approximately 900 base pairs, adjacent to the fljB (H2) gene, which specifies the synthesis of phase-2 flagellin, can exist in either orientation with respect to fljB. The orientation of the inversion region controls expression of fljB. The hin gene occupies about two-thirds of the inversion region; it is required for the inversion of the fljB controlling region. This chain is DNA-invertase hin (hin), found in Salmonella typhimurium (strain LT2 / SGSC1412 / ATCC 700720).